The sequence spans 285 residues: Inositol monophosphatase 1 (285 aa).

Residues E73, D93, I95, and D96 each coordinate Mg(2+). E73 is a substrate binding site. Substrate-binding positions include 95–98, 198–200, E217, and D224; these read IDGT and GTA. Residue D224 participates in Mg(2+) binding.

The protein belongs to the inositol monophosphatase superfamily. In terms of assembly, homodimer. Mg(2+) serves as cofactor.

The protein localises to the cytoplasm. It carries out the reaction a myo-inositol phosphate + H2O = myo-inositol + phosphate. It catalyses the reaction 1D-myo-inositol 1-phosphate + H2O = myo-inositol + phosphate. The enzyme catalyses 1D-myo-inositol 2-phosphate + H2O = myo-inositol + phosphate. The catalysed reaction is 1D-myo-inositol 3-phosphate + H2O = myo-inositol + phosphate. It carries out the reaction 1D-myo-inositol 4-phosphate + H2O = myo-inositol + phosphate. It catalyses the reaction 1D-myo-inositol 5-phosphate + H2O = myo-inositol + phosphate. The enzyme catalyses 1D-myo-inositol 6-phosphate + H2O = myo-inositol + phosphate. The catalysed reaction is scyllo-inositol 1-phosphate + H2O = scyllo-inositol + phosphate. It carries out the reaction alpha-D-galactose 1-phosphate + H2O = D-galactose + phosphate. It catalyses the reaction alpha-D-glucose 1-phosphate + H2O = D-glucose + phosphate. The enzyme catalyses D-glucose 6-phosphate + H2O = D-glucose + phosphate. The catalysed reaction is beta-D-fructose 1-phosphate + H2O = D-fructose + phosphate. It carries out the reaction glycerol 2-phosphate + H2O = glycerol + phosphate. It catalyses the reaction adenosine 2'-phosphate + H2O = adenosine + phosphate. Its pathway is polyol metabolism; myo-inositol biosynthesis; myo-inositol from D-glucose 6-phosphate: step 2/2. Its activity is regulated as follows. Inhibited by Li(+), Ca(2+) and Mn(2+), but also by Mg(2+) at concentrations above 3 mM. In terms of biological role, phosphatase involved in the dephosphorylation of myo-inositol monophosphate to generate myo-inositol. Is also able to dephosphorylate scyllo-inositol-phosphate, myo-inositol 1,4-diphosphate, scyllo-inositol-1,3-diphosphate and scyllo-inositol-1,4-diphosphate. Also dephosphorylates in vitro other sugar-phosphates including D-galactose-1-phosphate, glucose-1-phosphate, glucose-6-phosphate, fructose-1-phosphate, beta-glycerophosphate and 2'-AMP. Responsible for the provision of inositol required for synthesis of phosphatidylinositol and polyphosphoinositides, and involved in maintaining normal brain function. Has been implicated as the pharmacological target for lithium Li(+) action in brain. The chain is Inositol monophosphatase 1 (impa1) from Xenopus laevis (African clawed frog).